We begin with the raw amino-acid sequence, 328 residues long: Tetraacyldisaccharide 4'-kinase (328 aa).

Residue 55–62 participates in ATP binding; sequence TAGGNGKT.

Belongs to the LpxK family.

The catalysed reaction is a lipid A disaccharide + ATP = a lipid IVA + ADP + H(+). It functions in the pathway glycolipid biosynthesis; lipid IV(A) biosynthesis; lipid IV(A) from (3R)-3-hydroxytetradecanoyl-[acyl-carrier-protein] and UDP-N-acetyl-alpha-D-glucosamine: step 6/6. Transfers the gamma-phosphate of ATP to the 4'-position of a tetraacyldisaccharide 1-phosphate intermediate (termed DS-1-P) to form tetraacyldisaccharide 1,4'-bis-phosphate (lipid IVA). The polypeptide is Tetraacyldisaccharide 4'-kinase (Escherichia coli O45:K1 (strain S88 / ExPEC)).